The chain runs to 189 residues: dCTP deaminase (189 aa).

DCTP-binding positions include 112–117 (KSTYAR), 136–138 (TLE), glutamine 157, tyrosine 171, and glutamine 181. Glutamate 138 acts as the Proton donor/acceptor in catalysis.

Belongs to the dCTP deaminase family. As to quaternary structure, homotrimer.

The catalysed reaction is dCTP + H2O + H(+) = dUTP + NH4(+). Its pathway is pyrimidine metabolism; dUMP biosynthesis; dUMP from dCTP (dUTP route): step 1/2. Catalyzes the deamination of dCTP to dUTP. This chain is dCTP deaminase, found in Xanthomonas euvesicatoria pv. vesicatoria (strain 85-10) (Xanthomonas campestris pv. vesicatoria).